A 178-amino-acid chain; its full sequence is Large ribosomal subunit protein uL5 (178 aa).

Alanine 2 is subject to N-acetylalanine. Lysine 38 is covalently cross-linked (Glycyl lysine isopeptide (Lys-Gly) (interchain with G-Cter in SUMO2)). Phosphothreonine occurs at positions 44 and 47. Position 52 is an N6-acetyllysine; alternate (lysine 52). Lysine 52 is covalently cross-linked (Glycyl lysine isopeptide (Lys-Gly) (interchain with G-Cter in SUMO2); alternate). Residue lysine 85 is modified to N6-acetyllysine. Lysine 154 is covalently cross-linked (Glycyl lysine isopeptide (Lys-Gly) (interchain with G-Cter in SUMO2)).

Belongs to the universal ribosomal protein uL5 family. In terms of assembly, component of the large ribosomal subunit (LSU). Part of the 5S RNP complex, which is a LSU subcomplex composed of the 5S RNA, RPL5 and RPL11. Component of a hexameric 5S RNP precursor complex, composed of 5S RNA, RRS1, RPF2/BXDC1, RPL5, RPL11 and HEATR3; this complex acts as a precursor for ribosome assembly. Interacts with PML. Interacts with MDM2 (via its RanBP2-type zinc finger domain); negatively regulates MDM2-mediated TP53 ubiquitination and degradation. Interacts with NOP53; retains RPL11 into the nucleolus.

It localises to the nucleus. Its subcellular location is the nucleolus. The protein localises to the cytoplasm. Component of the ribosome, a large ribonucleoprotein complex responsible for the synthesis of proteins in the cell. The small ribosomal subunit (SSU) binds messenger RNAs (mRNAs) and translates the encoded message by selecting cognate aminoacyl-transfer RNA (tRNA) molecules. The large subunit (LSU) contains the ribosomal catalytic site termed the peptidyl transferase center (PTC), which catalyzes the formation of peptide bonds, thereby polymerizing the amino acids delivered by tRNAs into a polypeptide chain. The nascent polypeptides leave the ribosome through a tunnel in the LSU and interact with protein factors that function in enzymatic processing, targeting, and the membrane insertion of nascent chains at the exit of the ribosomal tunnel. As part of the 5S RNP/5S ribonucleoprotein particle it is an essential component of the LSU, required for its formation and the maturation of rRNAs. It also couples ribosome biogenesis to p53/TP53 activation. As part of the 5S RNP it accumulates in the nucleoplasm and inhibits MDM2, when ribosome biogenesis is perturbed, mediating the stabilization and the activation of TP53. Promotes nucleolar location of PML. The polypeptide is Large ribosomal subunit protein uL5 (RPL11) (Oryctolagus cuniculus (Rabbit)).